Consider the following 418-residue polypeptide: Thermolabile hemolysin (418 aa).

The signal sequence occupies residues 1 to 19; it reads MMKKTITLLTALLPLASAV. The active-site Nucleophile is Ser-153. Residues Asp-390 and His-393 contribute to the active site.

The protein belongs to the 'GDSL' lipolytic enzyme family. Post-translationally, there are two forms of LDH. The LDH(S) may be a protein in which 13 residues of the N-terminal of LDH(L) are deleted.

It localises to the secreted. In terms of biological role, phospholipase hydrolyzing both fatty acid esters of phospholipid, i.e. it hydrolyzes phosphatidylcholine (PC) to lysophosphatidylcholine (LPC) and then LPC to glycerophosphorylcholine (GPC). The sequence is that of Thermolabile hemolysin from Vibrio parahaemolyticus serotype O3:K6 (strain RIMD 2210633).